Consider the following 140-residue polypeptide: MLKTIKKIIKLQIKGGLANPAPPIGPALGSAGVNIMDFCKQYNFSTQKSKGKLLPVIITIYNDKSFSFIIKEPPVSKQLLELCKLDKGSKESNKIKVGKITLAKIESIAKNKIIDMNCFNIKSAISMVAGTARSMGIEIL.

This sequence belongs to the universal ribosomal protein uL11 family. In terms of assembly, part of the ribosomal stalk of the 50S ribosomal subunit. Interacts with L10 and the large rRNA to form the base of the stalk. L10 forms an elongated spine to which L12 dimers bind in a sequential fashion forming a multimeric L10(L12)X complex. One or more lysine residues are methylated.

Forms part of the ribosomal stalk which helps the ribosome interact with GTP-bound translation factors. The chain is Large ribosomal subunit protein uL11 from Karelsulcia muelleri (strain GWSS) (Sulcia muelleri).